A 284-amino-acid chain; its full sequence is Pseudopaline exporter CntI (284 aa).

Helical transmembrane passes span 2–22 (VLDL…TFSV), 34–54 (LPAA…IYLL), 74–94 (GVMG…IPLA), 96–116 (ASIL…LFLG), 122–142 (AVYW…KPFS), 147–167 (SVYA…SVAI), 179–199 (IVFY…WSDF), 209–229 (GLLL…TRAF), 236–256 (IVAV…WLFW), and 259–279 (VPDA…IALS). EamA domains follow at residues 8–138 (SGVL…LMIV) and 151–279 (VVGL…IALS).

The protein belongs to the EamA transporter family.

The protein resides in the cell inner membrane. Transports the metallophore pseudopaline, which is involved in the acquisition of nickel and zinc, and thus enables bacterial growth inside the host, where metal access is limited. Is probably involved in the export of pseudopaline. The polypeptide is Pseudopaline exporter CntI (Pseudomonas aeruginosa (strain UCBPP-PA14)).